The primary structure comprises 348 residues: Protein pelota homolog (348 aa).

The protein belongs to the eukaryotic release factor 1 family. Pelota subfamily. Monomer. A divalent metal cation serves as cofactor.

It is found in the cytoplasm. In terms of biological role, may function in recognizing stalled ribosomes, interact with stem-loop structures in stalled mRNA molecules, and effect endonucleolytic cleavage of the mRNA. May play a role in the release non-functional ribosomes and degradation of damaged mRNAs. Has endoribonuclease activity. In Methanococcus aeolicus (strain ATCC BAA-1280 / DSM 17508 / OCM 812 / Nankai-3), this protein is Protein pelota homolog.